The chain runs to 480 residues: Protein nucleotidyltransferase YdiU (480 aa).

Gly86, Gly88, Arg89, Lys109, Asp121, Gly122, Arg172, and Arg179 together coordinate ATP. Asp248 (proton acceptor) is an active-site residue. The Mg(2+) site is built by Asn249 and Asp258. Asp258 serves as a coordination point for ATP.

It belongs to the SELO family. Requires Mg(2+) as cofactor. Mn(2+) is required as a cofactor.

It carries out the reaction L-seryl-[protein] + ATP = 3-O-(5'-adenylyl)-L-seryl-[protein] + diphosphate. The enzyme catalyses L-threonyl-[protein] + ATP = 3-O-(5'-adenylyl)-L-threonyl-[protein] + diphosphate. It catalyses the reaction L-tyrosyl-[protein] + ATP = O-(5'-adenylyl)-L-tyrosyl-[protein] + diphosphate. The catalysed reaction is L-histidyl-[protein] + UTP = N(tele)-(5'-uridylyl)-L-histidyl-[protein] + diphosphate. It carries out the reaction L-seryl-[protein] + UTP = O-(5'-uridylyl)-L-seryl-[protein] + diphosphate. The enzyme catalyses L-tyrosyl-[protein] + UTP = O-(5'-uridylyl)-L-tyrosyl-[protein] + diphosphate. Functionally, nucleotidyltransferase involved in the post-translational modification of proteins. It can catalyze the addition of adenosine monophosphate (AMP) or uridine monophosphate (UMP) to a protein, resulting in modifications known as AMPylation and UMPylation. In Salmonella arizonae (strain ATCC BAA-731 / CDC346-86 / RSK2980), this protein is Protein nucleotidyltransferase YdiU.